The primary structure comprises 190 residues: Iron-sulfur assembly protein 1 (190 aa).

The disordered stretch occupies residues 49–71 (PSLKPSAAGSGSTAPKPVTEREI). Fe cation is bound by residues Cys116, Cys180, and Cys182.

This sequence belongs to the HesB/IscA family.

The protein resides in the mitochondrion matrix. In terms of biological role, involved in the assembly of mitochondrial and cytoplasmic iron-sulfur proteins. Probably involved in the binding of an intermediate of Fe/S cluster assembly. The sequence is that of Iron-sulfur assembly protein 1 (isa1) from Schizosaccharomyces pombe (strain 972 / ATCC 24843) (Fission yeast).